Reading from the N-terminus, the 168-residue chain is ATP synthase F(1) complex subunit delta, mitochondrial (168 aa).

The N-terminal 22 residues, 1-22 (MLPSALLRRPGLGRLVRQVRLY), are a transit peptide targeting the mitochondrion. N6-acetyllysine; alternate occurs at positions 136 and 165. N6-succinyllysine; alternate occurs at positions 136 and 165.

Belongs to the ATPase epsilon chain family. As to quaternary structure, component of the ATP synthase complex composed at least of ATP5F1A/subunit alpha, ATP5F1B/subunit beta, ATP5MC1/subunit c (homooctomer), MT-ATP6/subunit a, MT-ATP8/subunit 8, ATP5ME/subunit e, ATP5MF/subunit f, ATP5MG/subunit g, ATP5MK/subunit k, ATP5MJ/subunit j, ATP5F1C/subunit gamma, ATP5F1D/subunit delta, ATP5F1E/subunit epsilon, ATP5PF/subunit F6, ATP5PB/subunit b, ATP5PD/subunit d, ATP5PO/subunit OSCP. ATP synthase complex consists of a soluble F(1) head domain (subunits alpha(3) and beta(3)) - the catalytic core - and a membrane F(0) domain - the membrane proton channel (subunits c, a, 8, e, f, g, k and j). These two domains are linked by a central stalk (subunits gamma, delta, and epsilon) rotating inside the F1 region and a stationary peripheral stalk (subunits F6, b, d, and OSCP). Component of a complex composed at least by ATPIF1, ATP5F1A, ATP5F1B, ATP5F1C AND ATP5F1E.

It is found in the mitochondrion. It localises to the mitochondrion inner membrane. Functionally, subunit delta, of the mitochondrial membrane ATP synthase complex (F(1)F(0) ATP synthase or Complex V) that produces ATP from ADP in the presence of a proton gradient across the membrane which is generated by electron transport complexes of the respiratory chain. ATP synthase complex consist of a soluble F(1) head domain - the catalytic core - and a membrane F(1) domain - the membrane proton channel. These two domains are linked by a central stalk rotating inside the F(1) region and a stationary peripheral stalk. During catalysis, ATP synthesis in the catalytic domain of F(1) is coupled via a rotary mechanism of the central stalk subunits to proton translocation. In vivo, can only synthesize ATP although its ATP hydrolase activity can be activated artificially in vitro. With the central stalk subunit gamma, is essential for the biogenesis of F(1) catalytic part of the ATP synthase complex namely in the formation of F1 assembly intermediate. This chain is ATP synthase F(1) complex subunit delta, mitochondrial, found in Bos taurus (Bovine).